We begin with the raw amino-acid sequence, 449 residues long: MFS-type transporter hasB (449 aa).

12 helical membrane passes run 44-64 (VAGSFLLQFCSFGYVNACGIF), 80-100 (ALAWITTLQIFLLFMFGPAVG), 112-132 (LPPFSIGAVFSVCMLSLCTKY), 135-155 (VMLAQGVAFGLAAAGLSLPAM), 168-188 (LAVGIVSAGSSLGGVIYPCML), 195-215 (VGFASAVRWTALMQGILLFIA), 255-275 (LPWGFFVLGCFFTMWGLFAPL), 296-316 (AIANAGSLVGRIVPGWVSDII), 322-342 (MCIVTSLSGVLVLAFWLPLEF), 346-366 (LAGIIVFALLFGFVSGGFVSL), 387-407 (GGFCLAIALGALTGLPIEGAI), and 415-435 (FTGLMCFAGATMILGGVCTGT).

The protein belongs to the major facilitator superfamily. Monocarboxylate porter (TC 2.A.1.13) family.

It is found in the membrane. Its function is as follows. MFS-type transporter; part of the gene cluster that mediates the biosynthesis of hexadehydro-astechrome (HAS), a tryptophan-derived iron(III)-complex that acts as a virulence factor in infected mice. Required for the production of HAS. The sequence is that of MFS-type transporter hasB from Aspergillus fumigatus (strain CBS 144.89 / FGSC A1163 / CEA10) (Neosartorya fumigata).